The primary structure comprises 195 residues: Peptidyl-tRNA hydrolase (195 aa).

Tyr17 serves as a coordination point for tRNA. The active-site Proton acceptor is the His22. Residues Phe68, Asn70, and Asn116 each contribute to the tRNA site.

It belongs to the PTH family. In terms of assembly, monomer.

Its subcellular location is the cytoplasm. The catalysed reaction is an N-acyl-L-alpha-aminoacyl-tRNA + H2O = an N-acyl-L-amino acid + a tRNA + H(+). Functionally, hydrolyzes ribosome-free peptidyl-tRNAs (with 1 or more amino acids incorporated), which drop off the ribosome during protein synthesis, or as a result of ribosome stalling. Its function is as follows. Catalyzes the release of premature peptidyl moieties from peptidyl-tRNA molecules trapped in stalled 50S ribosomal subunits, and thus maintains levels of free tRNAs and 50S ribosomes. The polypeptide is Peptidyl-tRNA hydrolase (Pectobacterium carotovorum subsp. carotovorum (strain PC1)).